Reading from the N-terminus, the 281-residue chain is Ribosomal protein L11 methyltransferase (281 aa).

The S-adenosyl-L-methionine site is built by Thr133, Gly154, Asp175, and Asn216.

It belongs to the methyltransferase superfamily. PrmA family.

It localises to the cytoplasm. The catalysed reaction is L-lysyl-[protein] + 3 S-adenosyl-L-methionine = N(6),N(6),N(6)-trimethyl-L-lysyl-[protein] + 3 S-adenosyl-L-homocysteine + 3 H(+). Functionally, methylates ribosomal protein L11. The sequence is that of Ribosomal protein L11 methyltransferase from Campylobacter jejuni (strain RM1221).